The chain runs to 365 residues: Probable dual-specificity RNA methyltransferase RlmN (365 aa).

Glu111 functions as the Proton acceptor in the catalytic mechanism. The region spanning 117–351 (ADDRMTACIS…VNIRRSRGKD (235 aa)) is the Radical SAM core domain. An intrachain disulfide couples Cys124 to Cys356. [4Fe-4S] cluster-binding residues include Cys131, Cys135, and Cys138. S-adenosyl-L-methionine contacts are provided by residues 182-183 (GE), Ser214, 237-239 (SLH), and Asn313. Residue Cys356 is the S-methylcysteine intermediate of the active site.

The protein belongs to the radical SAM superfamily. RlmN family. [4Fe-4S] cluster is required as a cofactor.

The protein localises to the cytoplasm. The enzyme catalyses adenosine(2503) in 23S rRNA + 2 reduced [2Fe-2S]-[ferredoxin] + 2 S-adenosyl-L-methionine = 2-methyladenosine(2503) in 23S rRNA + 5'-deoxyadenosine + L-methionine + 2 oxidized [2Fe-2S]-[ferredoxin] + S-adenosyl-L-homocysteine. It carries out the reaction adenosine(37) in tRNA + 2 reduced [2Fe-2S]-[ferredoxin] + 2 S-adenosyl-L-methionine = 2-methyladenosine(37) in tRNA + 5'-deoxyadenosine + L-methionine + 2 oxidized [2Fe-2S]-[ferredoxin] + S-adenosyl-L-homocysteine. Specifically methylates position 2 of adenine 2503 in 23S rRNA and position 2 of adenine 37 in tRNAs. The sequence is that of Probable dual-specificity RNA methyltransferase RlmN from Cytophaga hutchinsonii (strain ATCC 33406 / DSM 1761 / CIP 103989 / NBRC 15051 / NCIMB 9469 / D465).